A 235-amino-acid polypeptide reads, in one-letter code: RING-H2 finger protein ATL33 (235 aa).

A helical transmembrane segment spans residues 64–84 (LIFVVIAFVAVPALVYALFFN). The tract at residues 87-133 (CSSSRRNSSSSRTSSSSDDTPHATVDTPPITETTVTSESGGKFHKDT) is disordered. Positions 88–103 (SSSRRNSSSSRTSSSS) are enriched in low complexity. Over residues 116 to 125 (ITETTVTSES) the composition is skewed to polar residues. Residues 142-184 (CSVCLMVFTDSDELRQLSECKHAFHVLCIETWLKDHPNCPICR) form an RING-type; atypical zinc finger. The span at 201–216 (NVNGNVNRSGGNRRVS) shows a compositional bias: low complexity. Positions 201–235 (NVNGNVNRSGGNRRVSATSRDDDWRQGLPDASSLV) are disordered.

Belongs to the RING-type zinc finger family. ATL subfamily.

It localises to the membrane. It catalyses the reaction S-ubiquitinyl-[E2 ubiquitin-conjugating enzyme]-L-cysteine + [acceptor protein]-L-lysine = [E2 ubiquitin-conjugating enzyme]-L-cysteine + N(6)-ubiquitinyl-[acceptor protein]-L-lysine.. The protein operates within protein modification; protein ubiquitination. This chain is RING-H2 finger protein ATL33 (ATL33), found in Arabidopsis thaliana (Mouse-ear cress).